The primary structure comprises 194 residues: Imidazoleglycerol-phosphate dehydratase (194 aa).

This sequence belongs to the imidazoleglycerol-phosphate dehydratase family.

The protein resides in the cytoplasm. It catalyses the reaction D-erythro-1-(imidazol-4-yl)glycerol 3-phosphate = 3-(imidazol-4-yl)-2-oxopropyl phosphate + H2O. Its pathway is amino-acid biosynthesis; L-histidine biosynthesis; L-histidine from 5-phospho-alpha-D-ribose 1-diphosphate: step 6/9. This is Imidazoleglycerol-phosphate dehydratase from Bacillus cereus (strain B4264).